A 196-amino-acid chain; its full sequence is MQTLIESEFNAHLQSAQKIFTLTPAIQKAADILIQSLKNGGKILICGNGGSAADAQHFAAELTGRYKRERKGLAGIALSVDTSALTAIGNDYGFEYVFSRQVESLAQKGDVFFGISTSGNSHNVLKAAQIARDMDCFVIGLSGRDGGKLSALCDINLIMPDNDTPRIQELHILIIHILCDIIESECGENGNTNVIS.

One can recognise an SIS domain in the interval 33–192 (LIQSLKNGGK…ESECGENGNT (160 aa)). 48–50 (NGG) serves as a coordination point for substrate. Positions 57 and 61 each coordinate Zn(2+). Substrate is bound by residues glutamate 61, 90–91 (ND), 116–118 (STS), serine 121, and glutamine 168. Zn(2+) contacts are provided by glutamine 168 and histidine 176.

Belongs to the SIS family. GmhA subfamily. In terms of assembly, homotetramer. Zn(2+) serves as cofactor.

It localises to the cytoplasm. It carries out the reaction 2 D-sedoheptulose 7-phosphate = D-glycero-alpha-D-manno-heptose 7-phosphate + D-glycero-beta-D-manno-heptose 7-phosphate. Its pathway is carbohydrate biosynthesis; D-glycero-D-manno-heptose 7-phosphate biosynthesis; D-glycero-alpha-D-manno-heptose 7-phosphate and D-glycero-beta-D-manno-heptose 7-phosphate from sedoheptulose 7-phosphate: step 1/1. Functionally, catalyzes the isomerization of sedoheptulose 7-phosphate in D-glycero-D-manno-heptose 7-phosphate. In Helicobacter hepaticus (strain ATCC 51449 / 3B1), this protein is Phosphoheptose isomerase.